The sequence spans 544 residues: Membrane protein insertase YidC (544 aa).

5 helical membrane-spanning segments follow: residues 6–26 (NLLL…WETD), 343–363 (KFLH…TFIV), 418–438 (LGGC…YYML), 456–476 (LSAQ…MFFI), and 497–517 (PVIF…YYIV).

The protein belongs to the OXA1/ALB3/YidC family. Type 1 subfamily. As to quaternary structure, interacts with the Sec translocase complex via SecD. Specifically interacts with transmembrane segments of nascent integral membrane proteins during membrane integration.

Its subcellular location is the cell inner membrane. Its function is as follows. Required for the insertion and/or proper folding and/or complex formation of integral membrane proteins into the membrane. Involved in integration of membrane proteins that insert both dependently and independently of the Sec translocase complex, as well as at least some lipoproteins. Aids folding of multispanning membrane proteins. In Pectobacterium atrosepticum (strain SCRI 1043 / ATCC BAA-672) (Erwinia carotovora subsp. atroseptica), this protein is Membrane protein insertase YidC.